A 197-amino-acid polypeptide reads, in one-letter code: Recombination protein RecR (197 aa).

The C4-type zinc finger occupies 57–72; the sequence is CSVCFAITEDDPCWIC. Residues 79-174 form the Toprim domain; the sequence is GTICVVEEPQ…KVTRLAHGIP (96 aa).

This sequence belongs to the RecR family.

Functionally, may play a role in DNA repair. It seems to be involved in an RecBC-independent recombinational process of DNA repair. It may act with RecF and RecO. This chain is Recombination protein RecR, found in Citrifermentans bemidjiense (strain ATCC BAA-1014 / DSM 16622 / JCM 12645 / Bem) (Geobacter bemidjiensis).